The primary structure comprises 325 residues: MKHFQSKVLTAAILAALSGSAMADNPPPSTDEIAKAALVNSYNNTQDINGFKVGDTIYDINGNGKITRKTATEDDVKADDFGGLGLKEVLAQHDQSLADLTGTVDENSEALVKTAEVVNDISADVKANTAAIGENKAAIAKKADQTALDAVSEKVTANETAIGKKANSADVYTKAEVYTKQESDNRFVKIGDRIGNLNTTANGLETRLADAEKSVADHGTRLASAEKSITEHGTRLNGLDRTVSDLRKETRQGLAEQAALSGLFQPYNVGRFNVTAAVGGYKSESAVAIGTGFRFTENFAAKAGVAVGTSSGSSAAYHVGVNYEW.

The first 23 residues, 1–23 (MKHFQSKVLTAAILAALSGSAMA), serve as a signal peptide directing secretion. Positions 24–137 (DNPPPSTDEI…NTAAIGENKA (114 aa)) are head domain. A coiled-coil region spans residues 86–135 (LKEVLAQHDQSLADLTGTVDENSEALVKTAEVVNDISADVKANTAAIGEN). The segment at 139–231 (IAKKADQTAL…LASAEKSITE (93 aa)) is coiled stalk domain. The interval 232–270 (HGTRLNGLDRTVSDLRKETRQGLAEQAALSGLFQPYNVG) is outer membrane translocation of the passenger domain. The next 4 beta stranded transmembrane spans lie at 270-280 (GRFNVTAAVGG), 284-295 (ESAVAIGTGFRF), 302-308 (KAGVAVG), and 314-325 (SAAYHVGVNYEW). A translocator domain region spans residues 271–325 (RFNVTAAVGGYKSESAVAIGTGFRFTENFAAKAGVAVGTSSGSSAAYHVGVNYEW).

It belongs to the autotransporter-2 (AT-2) (TC 1.B.40) family. Homotrimer.

Its subcellular location is the cell surface. The protein localises to the cell outer membrane. Its function is as follows. An antigenic bacterial cell surface protein that adheres to and induces bacterial uptake by human epithelial cells. This is Neisseria adhesin A from Neisseria meningitidis serogroup B.